Here is a 140-residue protein sequence, read N- to C-terminus: Ribonuclease P protein component (140 aa).

The protein belongs to the RnpA family. Consists of a catalytic RNA component (M1 or rnpB) and a protein subunit.

It carries out the reaction Endonucleolytic cleavage of RNA, removing 5'-extranucleotides from tRNA precursor.. In terms of biological role, RNaseP catalyzes the removal of the 5'-leader sequence from pre-tRNA to produce the mature 5'-terminus. It can also cleave other RNA substrates such as 4.5S RNA. The protein component plays an auxiliary but essential role in vivo by binding to the 5'-leader sequence and broadening the substrate specificity of the ribozyme. In Ralstonia pickettii (strain 12J), this protein is Ribonuclease P protein component.